Consider the following 182-residue polypeptide: MAIAESFKVEDGFSVLAGVVARRDGTVEAVAVDTATVGGTDATEAAVRIAERLLKPDVSIIMLDGCVVSFYNWIDGEALWRRFGVPVACYVFEDPEGRVEEAVKKLFKDWELRIEAIRRLGWPTPYYTKSGYKIYIRSWGIDPADAGRAAELCAKFGKWPEPIRVAQLVASGVREYLSRRSR.

It belongs to the UPF0215 family.

This Pyrobaculum calidifontis (strain DSM 21063 / JCM 11548 / VA1) protein is UPF0215 protein Pcal_0119.